The following is a 225-amino-acid chain: UPF0758 protein NGK_1225 (225 aa).

The 123-residue stretch at 102–224 folds into the MPN domain; the sequence is TLSDPDTVAD…VRSFRQLGLM (123 aa). H173, H175, and D186 together coordinate Zn(2+). A JAMM motif motif is present at residues 173–186; it reads HNHPGGSPEPSQED.

It belongs to the UPF0758 family.

In Neisseria gonorrhoeae (strain NCCP11945), this protein is UPF0758 protein NGK_1225.